Reading from the N-terminus, the 120-residue chain is Aspartate 1-decarboxylase (120 aa).

Ser-25 serves as the catalytic Schiff-base intermediate with substrate; via pyruvic acid. Ser-25 carries the pyruvic acid (Ser) modification. Thr-57 is a binding site for substrate. Tyr-58 acts as the Proton donor in catalysis. Residue Gly-73–Ala-75 participates in substrate binding.

It belongs to the PanD family. Heterooctamer of four alpha and four beta subunits. Requires pyruvate as cofactor. Is synthesized initially as an inactive proenzyme, which is activated by self-cleavage at a specific serine bond to produce a beta-subunit with a hydroxyl group at its C-terminus and an alpha-subunit with a pyruvoyl group at its N-terminus.

Its subcellular location is the cytoplasm. The enzyme catalyses L-aspartate + H(+) = beta-alanine + CO2. It functions in the pathway cofactor biosynthesis; (R)-pantothenate biosynthesis; beta-alanine from L-aspartate: step 1/1. In terms of biological role, catalyzes the pyruvoyl-dependent decarboxylation of aspartate to produce beta-alanine. The sequence is that of Aspartate 1-decarboxylase from Deinococcus radiodurans (strain ATCC 13939 / DSM 20539 / JCM 16871 / CCUG 27074 / LMG 4051 / NBRC 15346 / NCIMB 9279 / VKM B-1422 / R1).